The following is a 759-amino-acid chain: Putative ATP-dependent DNA helicase YjcD (759 aa).

Positions Ala68–Pro121 are disordered. Positions Cys69–Asp81 are enriched in basic and acidic residues. The UvrD-like helicase ATP-binding domain maps to Val134–Thr413. ATP-binding positions include Gly158 to Arg163 and Arg411. Residues His414–Gly676 form the UvrD-like helicase C-terminal domain.

The protein belongs to the helicase family. UvrD subfamily.

The protein resides in the cytoplasm. It carries out the reaction Couples ATP hydrolysis with the unwinding of duplex DNA by translocating in the 3'-5' direction.. The catalysed reaction is ATP + H2O = ADP + phosphate + H(+). In terms of biological role, may be involved in the generation of recombinogenic substrates for the subsequent action of RecA. This is Putative ATP-dependent DNA helicase YjcD (yjcD) from Bacillus subtilis (strain 168).